The chain runs to 143 residues: uncharacterized protein (143 aa).

In terms of domain architecture, HTH marR-type spans 5–137 (DARLASDLSL…LRNAADLILE (133 aa)). The H-T-H motif DNA-binding region spans 51–74 (PGALAIRERVRPPSMTRVIASLAD).

As to quaternary structure, homodimer.

This is an uncharacterized protein from Mycobacterium leprae (strain TN).